The sequence spans 205 residues: High frequency lysogenization protein HflD homolog (205 aa).

The protein belongs to the HflD family.

It localises to the cytoplasm. Its subcellular location is the cell inner membrane. The protein is High frequency lysogenization protein HflD homolog of Shewanella baltica (strain OS185).